We begin with the raw amino-acid sequence, 175 residues long: Regenerating islet-derived protein 3-gamma (175 aa).

The signal sequence occupies residues 1 to 26; sequence MLPPMALPSVSWMLLSCLILLCQVQG. Positions 27-37 are excised as a propeptide; it reads EETQKELPSPR. 3 disulfide bridges follow: C40–C51, C68–C171, and C146–C163. Positions 47–172 constitute a C-type lectin domain; sequence YGSPCYALFL…CDAKLPYVCK (126 aa). A sufficient to activate EXTL3 region spans residues 103–118; the sequence is WIGLHDPTQGSEPDGD. H107 is a Zn(2+) binding site. The EPN signature appears at 114–116; that stretch reads EPD. Positions 121 and 145 each coordinate Zn(2+).

Forms a hexameric membrane-permeabilizing oligomeric pore on membrane phospholipids. The hexamer is formed by three dimers related by helical symmetry. Forms filaments, filamentation traps pore complexes and limits damage to host cells. Interacts with EXTL3. Proteolytic processing by trypsin removes an inhibitory N-terminal propeptide and is essential for peptidoglycan binding and antibacterial activity. As to expression, predominantly expressed in pancreas, where it may be restricted to exocrine pancreas. Moderate expression levels in testis and weak in heart, kidney and placenta.

It is found in the secreted. Its subcellular location is the cytoplasm. Lipopolysaccharide inhibits pore-forming activity, explaining why is bactericidal for Gram-positive but not Gram-negative bacteria. Its function is as follows. Bactericidal C-type lectin which acts exclusively against Gram-positive bacteria and mediates bacterial killing by binding to surface-exposed carbohydrate moieties of peptidoglycan. Restricts bacterial colonization of the intestinal epithelial surface and consequently limits activation of adaptive immune responses by the microbiota. In terms of biological role, acts as a hormone in response to different stimuli like anti-inflammatory signals, such as IL17A, or gut microbiome. Is secreted by different cell types to activate its receptor EXTL3 and induce cell specific signaling pathways. Induced by IL17A in keratinocytes, regulates keratinocyte proliferation and differentiation after skin injury. In parallel, inhibits skin inflammation through the inhibition of inflammatory cytokines such as IL6 and TNF. Induced by IL22 in lung epithelial cells, inhibits cytokine production and regulates allergic airway inflammation. Induced in small intestine by inulin-enriched diet and Lactobacillus gasseri enriched microbiome, plays a role in the improvement of gut barrier function, the regulation of energy balance and glucose levels. Modulates microbiota composition in duodenal contents. Produced by nociceptor in response to endotoxins, prevents endotoxic death by targeting kynurenine pathway in microglia. Has bacteriostatic activity. Functionally, has bactericidal activity against L.monocytogenes and methicillin-resistant S.aureus. The polypeptide is Regenerating islet-derived protein 3-gamma (Homo sapiens (Human)).